The following is a 170-amino-acid chain: MTELQSALLLRRQLAELNKNPVEGFSAGLIDDNDLYRWEVLIIGPPDTLYEGGVFKAHLTFPKDYPLRPPKMKFITEIWHPNVDKNGDVCISILHEPGEDKYGYEKPEERWLPIHTVETIMISVISMLADPNGDSPANVDAAKEWREDRNGEFKRKVARCVRKSQETAFE.

Met-1 carries the N-acetylmethionine modification. Thr-2 carries the N-acetylthreonine; in Ubiquitin-conjugating enzyme E2 G1, N-terminally processed modification. The UBC core domain occupies 5–166 (QSALLLRRQL…VARCVRKSQE (162 aa)). Cys-90 functions as the Glycyl thioester intermediate in the catalytic mechanism.

Belongs to the ubiquitin-conjugating enzyme family. Post-translationally, autoubiquitinated in vitro. As to expression, widely expressed, mainly in skeletal muscle.

The catalysed reaction is S-ubiquitinyl-[E1 ubiquitin-activating enzyme]-L-cysteine + [E2 ubiquitin-conjugating enzyme]-L-cysteine = [E1 ubiquitin-activating enzyme]-L-cysteine + S-ubiquitinyl-[E2 ubiquitin-conjugating enzyme]-L-cysteine.. It functions in the pathway protein modification; protein ubiquitination. Accepts ubiquitin from the E1 complex and catalyzes its covalent attachment to other proteins. In vitro catalyzes 'Lys-48'-, as well as 'Lys-63'-linked polyubiquitination. May be involved in degradation of muscle-specific proteins. Mediates polyubiquitination of CYP3A4. The protein is Ubiquitin-conjugating enzyme E2 G1 (UBE2G1) of Homo sapiens (Human).